The sequence spans 100 residues: Urease subunit gamma (100 aa).

This sequence belongs to the urease gamma subunit family. Heterotrimer of UreA (gamma), UreB (beta) and UreC (alpha) subunits. Three heterotrimers associate to form the active enzyme.

The protein localises to the cytoplasm. The catalysed reaction is urea + 2 H2O + H(+) = hydrogencarbonate + 2 NH4(+). Its pathway is nitrogen metabolism; urea degradation; CO(2) and NH(3) from urea (urease route): step 1/1. The sequence is that of Urease subunit gamma from Ectopseudomonas mendocina (strain ymp) (Pseudomonas mendocina).